Consider the following 366-residue polypeptide: Phenylalanine--tRNA ligase alpha subunit (366 aa).

Glu-259 provides a ligand contact to Mg(2+).

The protein belongs to the class-II aminoacyl-tRNA synthetase family. Phe-tRNA synthetase alpha subunit type 1 subfamily. As to quaternary structure, tetramer of two alpha and two beta subunits. The cofactor is Mg(2+).

It localises to the cytoplasm. The enzyme catalyses tRNA(Phe) + L-phenylalanine + ATP = L-phenylalanyl-tRNA(Phe) + AMP + diphosphate + H(+). This is Phenylalanine--tRNA ligase alpha subunit from Novosphingobium aromaticivorans (strain ATCC 700278 / DSM 12444 / CCUG 56034 / CIP 105152 / NBRC 16084 / F199).